We begin with the raw amino-acid sequence, 115 residues long: uncharacterized protein (115 aa).

At 1-11 (MKLTKEKKNDC) the chain is on the cytoplasmic side. A helical transmembrane segment spans residues 12–32 (LVGVSYIPPLNFFTLTFLFLL). At 33-52 (RIEKVHLSLSLSLSLSLRFY) the chain is on the extracellular side. A helical membrane pass occupies residues 53-73 (YFHNVCYPSLFLFFCFVIPFF). The Cytoplasmic portion of the chain corresponds to 74–78 (YSVRF). Residues 79 to 98 (ILLYLHILRSFYELNILLLY) traverse the membrane as a helical segment. Residues 99–115 (GAENSRRQSPPGYYVIR) are Extracellular-facing.

It is found in the membrane. This is an uncharacterized protein from Saccharomyces cerevisiae (strain ATCC 204508 / S288c) (Baker's yeast).